Consider the following 108-residue polypeptide: Large ribosomal subunit protein uL23 (108 aa).

Belongs to the universal ribosomal protein uL23 family. Part of the 50S ribosomal subunit. Contacts protein L29, and trigger factor when it is bound to the ribosome.

Functionally, one of the early assembly proteins it binds 23S rRNA. One of the proteins that surrounds the polypeptide exit tunnel on the outside of the ribosome. Forms the main docking site for trigger factor binding to the ribosome. The polypeptide is Large ribosomal subunit protein uL23 (Leptothrix cholodnii (strain ATCC 51168 / LMG 8142 / SP-6) (Leptothrix discophora (strain SP-6))).